Reading from the N-terminus, the 96-residue chain is Small ribosomal subunit protein bS6 (96 aa).

This sequence belongs to the bacterial ribosomal protein bS6 family.

Binds together with bS18 to 16S ribosomal RNA. The polypeptide is Small ribosomal subunit protein bS6 (rpsF) (Streptomyces coelicolor (strain ATCC BAA-471 / A3(2) / M145)).